Reading from the N-terminus, the 399-residue chain is O-glucosyltransferase rumi homolog (399 aa).

The N-terminal stretch at 1–18 (MHFIIGIVICLSLSVIQS) is a signal peptide. 2 N-linked (GlcNAc...) asparagine glycosylation sites follow: asparagine 19 and asparagine 67. 4 disulfides stabilise this stretch: cysteine 66–cysteine 73, cysteine 71–cysteine 373, cysteine 118–cysteine 124, and cysteine 277–cysteine 300. Aspartate 149 (proton donor/acceptor) is an active-site residue. The interval 189 to 194 (AIALYP) is interaction with the consensus sequence C-X-S-X-[PA]-C in peptide substrates. Residues 224–228 (RGSRT), arginine 232, 271–273 (VTL), and 289–293 (AASFR) contribute to the UDP-alpha-D-glucose site.

Belongs to the glycosyltransferase 90 family.

The protein localises to the endoplasmic reticulum lumen. It is found in the secreted. Its pathway is protein modification; protein glycosylation. In terms of biological role, protein O-glucosyltransferase. Catalyzes the reaction that attaches glucose through an O-glycosidic linkage to a conserved serine residue found in the consensus sequence C-X-S-X-[PA]-C in epidermal growth factor-like repeats. Regulates Notch signaling by glucosylating Notch in the ER, glucosylation is required for the correct folding and cleavage of Notch. The polypeptide is O-glucosyltransferase rumi homolog (Anopheles gambiae (African malaria mosquito)).